Consider the following 47-residue polypeptide: Short transmembrane mitochondrial protein 1 (47 aa).

The chain crosses the membrane as a helical span at residues 7 to 23; the sequence is GFTLGNVVGMYLAQNYD.

It belongs to the STMP1 family. Interacts with components of the ubiquinol-cytochrome c oxidoreductase (cytochrome b-c1 complex, complex III, CIII), such as UQCRC1/QCR1, UQCRC2/QCR2 and UQCR10/QCR9. Interacts with components of the cytochrome c oxidase (mitochondrial respiratory chain complex IV) complex, such as MT-CO2. In terms of tissue distribution, expressed in monocytes and dendritic cells.

The protein resides in the mitochondrion inner membrane. It is found in the mitochondrion outer membrane. It localises to the mitochondrion intermembrane space. Microprotein involved in mitochondrial respiratory chain complex III (ubiquinol-cytochrome c oxidoreductase) and complex IV (mitochondrial cytochrome c oxidase complex) assembly. Required for the formation of mitochondrial supercomplexes (SCs). Also required for the activation of the NLRP3 inflammasome. The protein is Short transmembrane mitochondrial protein 1 of Homo sapiens (Human).